The chain runs to 385 residues: Lipid-A-disaccharide synthase (385 aa).

This sequence belongs to the LpxB family.

The catalysed reaction is 2-N,3-O-bis[(3R)-3-hydroxytetradecanoyl]-alpha-D-glucosaminyl 1-phosphate + UDP-2-N,3-O-bis[(3R)-3-hydroxytetradecanoyl]-alpha-D-glucosamine = lipid A disaccharide (E. coli) + UDP + H(+). It carries out the reaction a lipid X + a UDP-2-N,3-O-bis[(3R)-3-hydroxyacyl]-alpha-D-glucosamine = a lipid A disaccharide + UDP + H(+). The protein operates within glycolipid biosynthesis; lipid IV(A) biosynthesis; lipid IV(A) from (3R)-3-hydroxytetradecanoyl-[acyl-carrier-protein] and UDP-N-acetyl-alpha-D-glucosamine: step 5/6. Condensation of UDP-2,3-diacylglucosamine and 2,3-diacylglucosamine-1-phosphate to form lipid A disaccharide, a precursor of lipid A, a phosphorylated glycolipid that anchors the lipopolysaccharide to the outer membrane of the cell. This is Lipid-A-disaccharide synthase from Wigglesworthia glossinidia brevipalpis.